Consider the following 529-residue polypeptide: Bifunctional purine biosynthesis protein PurH (529 aa).

The 148-residue stretch at 1–148 (MQQRRPVRRA…KNHKDVAIVV (148 aa)) folds into the MGS-like domain.

This sequence belongs to the PurH family.

The enzyme catalyses (6R)-10-formyltetrahydrofolate + 5-amino-1-(5-phospho-beta-D-ribosyl)imidazole-4-carboxamide = 5-formamido-1-(5-phospho-D-ribosyl)imidazole-4-carboxamide + (6S)-5,6,7,8-tetrahydrofolate. The catalysed reaction is IMP + H2O = 5-formamido-1-(5-phospho-D-ribosyl)imidazole-4-carboxamide. Its pathway is purine metabolism; IMP biosynthesis via de novo pathway; 5-formamido-1-(5-phospho-D-ribosyl)imidazole-4-carboxamide from 5-amino-1-(5-phospho-D-ribosyl)imidazole-4-carboxamide (10-formyl THF route): step 1/1. The protein operates within purine metabolism; IMP biosynthesis via de novo pathway; IMP from 5-formamido-1-(5-phospho-D-ribosyl)imidazole-4-carboxamide: step 1/1. In Salmonella paratyphi A (strain ATCC 9150 / SARB42), this protein is Bifunctional purine biosynthesis protein PurH.